Here is a 572-residue protein sequence, read N- to C-terminus: Urease subunit alpha (572 aa).

The region spanning G136–F572 is the Urease domain. Residues H141, H143, and K224 each contribute to the Ni(2+) site. At K224 the chain carries N6-carboxylysine. H226 contacts substrate. Residues H253 and H279 each coordinate Ni(2+). The active-site Proton donor is H327. Residue D367 coordinates Ni(2+).

The protein belongs to the metallo-dependent hydrolases superfamily. Urease alpha subunit family. In terms of assembly, heterotrimer of UreA (gamma), UreB (beta) and UreC (alpha) subunits. Three heterotrimers associate to form the active enzyme. Requires Ni cation as cofactor. Post-translationally, carboxylation allows a single lysine to coordinate two nickel ions.

It localises to the cytoplasm. It catalyses the reaction urea + 2 H2O + H(+) = hydrogencarbonate + 2 NH4(+). It functions in the pathway nitrogen metabolism; urea degradation; CO(2) and NH(3) from urea (urease route): step 1/1. The sequence is that of Urease subunit alpha from Actinobacillus pleuropneumoniae serotype 7 (strain AP76).